A 151-amino-acid chain; its full sequence is Large ribosomal subunit protein bL9 (151 aa).

This sequence belongs to the bacterial ribosomal protein bL9 family.

Its function is as follows. Binds to the 23S rRNA. The protein is Large ribosomal subunit protein bL9 of Nitrosococcus oceani (strain ATCC 19707 / BCRC 17464 / JCM 30415 / NCIMB 11848 / C-107).